Here is an 804-residue protein sequence, read N- to C-terminus: Endoplasmin (804 aa).

The signal sequence occupies residues 1–21 (MRALWVLGLCCVLLTFGSVRA). The SRT pseudosubstrate motif signature appears at 42-44 (SRT). Asn62 carries an N-linked (GlcNAc...) asparagine glycan. Ser64 carries the post-translational modification Phosphoserine. An N-linked (GlcNAc...) asparagine glycan is attached at Asn107. ATP contacts are provided by Asn107, Asp149, and Asn162. Residue Lys168 is modified to N6-(2-hydroxyisobutyryl)lysine. Ser172 carries the post-translational modification Phosphoserine. Residue Phe199 participates in ATP binding. The N-linked (GlcNAc...) asparagine glycan is linked to Asn217. Thr288 bears the Phosphothreonine; by CK2 mark. The segment at 288-323 (TVEEPMEEEEAAKEEKEDSDDEAAVEEEEEEKKPKT) is disordered. Residues 289-317 (VEEPMEEEEAAKEEKEDSDDEAAVEEEEE) show a composition bias toward acidic residues. At Ser306 the chain carries Phosphoserine; by CK2. Ser403 bears the Phosphoserine mark. An N6-succinyllysine modification is found at Lys404. Asn445 carries N-linked (GlcNAc...) asparagine glycosylation. At Ser447 the chain carries Phosphoserine. N6-acetyllysine is present on Lys479. Asn481 and Asn502 each carry an N-linked (GlcNAc...) asparagine glycan. N6-succinyllysine is present on Lys633. The segment at 750 to 804 (DPDAKVEEEPEEEPEETTEDTTEDTEQDDEEEMDAGTDDEEQETVKKSTAEKDEL) is disordered. Acidic residues predominate over residues 757–791 (EEPEEEPEETTEDTTEDTEQDDEEEMDAGTDDEEQ). Phosphothreonine; by CK2 occurs at positions 766, 770, 774, and 786. The segment covering 792 to 804 (ETVKKSTAEKDEL) has biased composition (basic and acidic residues). A Prevents secretion from ER motif is present at residues 801–804 (KDEL).

The protein belongs to the heat shock protein 90 family. Homodimer; disulfide-linked. Component of an EIF2 complex at least composed of CELF1/CUGBP1, CALR, CALR3, EIF2S1, EIF2S2, HSP90B1 and HSPA5. Part of a large chaperone multiprotein complex comprising DNAJB11, HSP90B1, HSPA5, HYOU, PDIA2, PDIA4, PDIA6, PPIB, SDF2L1, UGGT1 and very small amounts of ERP29, but not, or at very low levels, CALR nor CANX. Interacts with AIMP1; regulates its retention in the endoplasmic reticulum. Hyperglycosylated form interacts with OS9; promoting its degradation by the endoplasmic reticulum associated degradation (ERAD). Interacts with CNPY3. This interaction is disrupted in the presence of ATP. Interacts with TLR4 and TLR9, but not with TLR3. Interacts with MZB1 in a calcium-dependent manner. Interacts with METTL23. Interacts with IL1B; the interaction facilitates cargo translocation into the ERGIC. Interacts with EIF2AK3. Phosphorylated by CK2. Post-translationally, N-glycosylated cotranslationally at Asn-217 by STT3A-containing OST-A complex: this glycosylation is constitutive. In response to various stress, 5 additional facultative sites (Asn-62, Asn-107, Asn-445, Asn-481 and Asn-502) can be glycosylated post-translationally by STT3B-containing OST-B complex, leading to a hyperglycosylated form that is degraded by the ER-associated degradation (ERAD) pathway. In normal conditions, the OST-A complex together with CCDC134 prevent glycosylation at facultative sites during protein folding, thereby preventing hyperglycosylation. Mechanistically, nascent HSP90B1 is tethered during translation to a specialized CCDC134-containing translocon that forms a microenvironment for its folding, in which STT3A associates with the SRT pseudosubstrate motif, and prevents access to facultative glycosylation sites until folding is completed, rendering its facultative sites inaccessible to the OST-B complex. Detected in heart muscle (at protein level).

The protein resides in the endoplasmic reticulum lumen. It localises to the sarcoplasmic reticulum lumen. Its subcellular location is the melanosome. It catalyses the reaction ATP + H2O = ADP + phosphate + H(+). ATP-dependent chaperone involved in the processing of proteins in the endoplasmic reticulum, regulating their transport. Together with MESD, acts as a modulator of the Wnt pathway by promoting the folding of LRP6, a coreceptor of the canonical Wnt pathway. When associated with CNPY3, required for proper folding of Toll-like receptors. Promotes folding and trafficking of TLR4 to the cell surface. May participate in the unfolding of cytosolic leaderless cargos (lacking the secretion signal sequence) such as the interleukin 1/IL-1 to facilitate their translocation into the ERGIC (endoplasmic reticulum-Golgi intermediate compartment) and secretion; the translocation process is mediated by the cargo receptor TMED10. May also function in endoplasmic reticulum associated degradation (ERAD); it is however unclear whether it participates to ERAD or is a target of ERAD. The chain is Endoplasmin (HSP90B1) from Canis lupus familiaris (Dog).